Reading from the N-terminus, the 201-residue chain is MFTRADFEIFDDPTLKGRLNKIYTELDPKFEVFGAQLQNELAVATNREFTLHIAKHLRRFKNPPMNTWMALSESSRGYKMMPHFEVGFGDDRIFVWFALMAEMPDKTDYAPLLASQSEKLLSDFTDYDLSYDHMTKQKFPMSPDNLQLIQDKFAKTKKGEWLLGKVYLKDNPLFDHPEELMADIQTTLLKMVPLYELINAK.

The protein belongs to the UPF0637 family.

The polypeptide is UPF0637 protein LCA_0842 (Latilactobacillus sakei subsp. sakei (strain 23K) (Lactobacillus sakei subsp. sakei)).